The following is an 893-amino-acid chain: Protein translocase subunit SecA (893 aa).

Residues Q87, 105–109 (GEGKT), and D512 each bind ATP. Residues 840–849 (VEEQHRKSEE) show a composition bias toward basic and acidic residues. The interval 840–893 (VEEQHRKSEEVPMDFQHQSASSPSEQAQTPRVGRNEPCPCGSGKKYKQCHGKLA) is disordered. The segment covering 855–868 (QHQSASSPSEQAQT) has biased composition (polar residues). Zn(2+) contacts are provided by C877, C879, C888, and H889. The span at 883-893 (KKYKQCHGKLA) shows a compositional bias: basic residues.

Belongs to the SecA family. In terms of assembly, monomer and homodimer. Part of the essential Sec protein translocation apparatus which comprises SecA, SecYEG and auxiliary proteins SecDF-YajC and YidC. Zn(2+) is required as a cofactor.

Its subcellular location is the cell inner membrane. It is found in the cytoplasm. It carries out the reaction ATP + H2O + cellular proteinSide 1 = ADP + phosphate + cellular proteinSide 2.. In terms of biological role, part of the Sec protein translocase complex. Interacts with the SecYEG preprotein conducting channel. Has a central role in coupling the hydrolysis of ATP to the transfer of proteins into and across the cell membrane, serving both as a receptor for the preprotein-SecB complex and as an ATP-driven molecular motor driving the stepwise translocation of polypeptide chains across the membrane. The polypeptide is Protein translocase subunit SecA (Colwellia psychrerythraea (strain 34H / ATCC BAA-681) (Vibrio psychroerythus)).